A 133-amino-acid polypeptide reads, in one-letter code: Fluoride-specific ion channel FluC 3 (133 aa).

Helical transmembrane passes span 7–27 (ILVLVGGFIGGVMRFFLSGYV), 37–57 (WGTFVVNVSGAFVIGTAAGLG), and 60–80 (LGAIFSTTIFHEFIMVGLLGG). Na(+) is bound by residues G79 and T82. The chain crosses the membrane as a helical span at residues 107–127 (IVASALLCVLAVAAGYGGIMW).

This sequence belongs to the fluoride channel Fluc/FEX (TC 1.A.43) family.

Its subcellular location is the cell inner membrane. It carries out the reaction fluoride(in) = fluoride(out). Na(+) is not transported, but it plays an essential structural role and its presence is essential for fluoride channel function. Fluoride-specific ion channel. Important for reducing fluoride concentration in the cell, thus reducing its toxicity. The protein is Fluoride-specific ion channel FluC 3 of Brucella suis biovar 1 (strain 1330).